Consider the following 231-residue polypeptide: 2-C-methyl-D-erythritol 4-phosphate cytidylyltransferase (231 aa).

It belongs to the IspD/TarI cytidylyltransferase family. IspD subfamily.

The enzyme catalyses 2-C-methyl-D-erythritol 4-phosphate + CTP + H(+) = 4-CDP-2-C-methyl-D-erythritol + diphosphate. It participates in isoprenoid biosynthesis; isopentenyl diphosphate biosynthesis via DXP pathway; isopentenyl diphosphate from 1-deoxy-D-xylulose 5-phosphate: step 2/6. Functionally, catalyzes the formation of 4-diphosphocytidyl-2-C-methyl-D-erythritol from CTP and 2-C-methyl-D-erythritol 4-phosphate (MEP). This is 2-C-methyl-D-erythritol 4-phosphate cytidylyltransferase from Fusobacterium nucleatum subsp. nucleatum (strain ATCC 25586 / DSM 15643 / BCRC 10681 / CIP 101130 / JCM 8532 / KCTC 2640 / LMG 13131 / VPI 4355).